The following is a 450-amino-acid chain: Keratin, type I cytoskeletal 25 (450 aa).

A compositionally biased stretch (low complexity) spans 1-11 (MSLRLSSASRR). The disordered stretch occupies residues 1 to 20 (MSLRLSSASRRSCPRPTTGS). The segment at 1-78 (MSLRLSSASR…VNERGLLSGN (78 aa)) is head. Positions 79–114 (EKVTMQNLNDRLASYLDSVHALEEANADLEQKIKGW) are coil 1A. In terms of domain architecture, IF rod spans 79 to 394 (EKVTMQNLND…LLIGGDDGAC (316 aa)). The tract at residues 115 to 136 (YEKFGPGSCRGLDHDYSRYFPI) is linker 1. Residues 137–228 (IDDLKNQIIA…KNHKEEMQVL (92 aa)) form a coil 1B region. Residues 229–251 (QCAAGGNVNVEMNAAPGVDLTVL) are linker 12. Residues 252–390 (LNNMRAEYEA…ETYCLLIGGD (139 aa)) are coil 2. Positions 391 to 450 (DGACKSGGYKSKDYGSGNVGSQVKDPAKAIVVKKVLEEVDQRSKILTTRLHSLEEKSQSN) are tail. Position 442 is a phosphoserine (S442).

The protein belongs to the intermediate filament family. Heterodimer of a type I and a type II keratin. Heterodimer with type II keratin KRT5 leading to the formation of keratin intermediate filament (KIF) network. Interacts with KRT6A to form filaments. In terms of tissue distribution, strongly expressed in skin and scalp, and weak expression observed in thymus and tongue. In the hair follicle, expressed in Henle layer, Huxley layer and in the inner root sheath cuticle of the hair follicle. Expression extends from the bulb region up to the point of differentiation into the three layers. Also present in the medulla of beard hair (at protein level).

It localises to the cytoplasm. Essential for the proper assembly of type I and type II keratin protein complexes and formation of keratin intermediate filaments in the inner root sheath (irs). Plays a role in the cytoskeleton organization. The sequence is that of Keratin, type I cytoskeletal 25 from Homo sapiens (Human).